Consider the following 989-residue polypeptide: Vacuolar membrane protease (989 aa).

Residues 1-25 (MDRQSLRTTLRAMDASNENGSAKGA) are disordered. Residues 1–41 (MDRQSLRTTLRAMDASNENGSAKGAKKTTIGSFVRWTFGFN) are Cytoplasmic-facing. A helical transmembrane segment spans residues 42–62 (SVPLTTLVTITTVLLGLLVYV). Topologically, residues 63-383 (STSVNPPDVT…YLFIILPLQY (321 aa)) are vacuolar. The Zn(2+) site is built by His181 and Asp193. Catalysis depends on Glu227, which acts as the Proton acceptor. Zn(2+) is bound at residue Glu228. Asn245 carries an N-linked (GlcNAc...) asparagine glycan. Zn(2+) contacts are provided by Glu253 and His325. The chain crosses the membrane as a helical span at residues 384–404 (IFVISCLTLAVGPIFVGFLFL). At 405–426 (LVLRKQINAGTSETILGGWLRS) the chain is on the cytoplasmic side. The helical transmembrane segment at 427 to 447 (IVSVLVSVVATYFVVETLHLG) threads the bilayer. Topologically, residues 448–460 (NELYVVRSFYTPL) are vacuolar. Residues 461-481 (FAGLGTFIFVNYVLLGFFHFV) traverse the membrane as a helical segment. Residues 482-488 (RPVCDQK) are Cytoplasmic-facing. The chain crosses the membrane as a helical span at residues 489 to 509 (LIILLELSVVLWVLLLLSVIH). Topologically, residues 510–520 (EATHKATGEYH) are vacuolar. A helical membrane pass occupies residues 521–541 (FLILYIVVATASILGLFGHLV). Over 542–611 (TSTETSTFVE…IAVSMGYDWS (70 aa)) the chain is Cytoplasmic. The interval 548–576 (TFVEGPEDEEDTVDASEATETSPLLPEAS) is disordered. Residues 552–561 (GPEDEEDTVD) are compositionally biased toward acidic residues. The helical transmembrane segment at 612-632 (IQFLLVVPITFFVTFGLAASL) threads the bilayer. The Vacuolar portion of the chain corresponds to 633–648 (LDGLHQTPLESEKSAD). Residues 649 to 669 (FVYTTITAMSVLVGITFLPFV) form a helical membrane-spanning segment. Over 670–673 (HKLQ) the chain is Cytoplasmic. Residues 674-694 (VFVPIVVVGVAVTASFVHILS) traverse the membrane as a helical segment. At 695 to 989 (PPFSSNAPAK…LVEVSKYVEL (295 aa)) the chain is on the vacuolar side. Residues Asn745, Asn793, and Asn822 are each glycosylated (N-linked (GlcNAc...) asparagine).

The protein belongs to the peptidase M28 family. Zn(2+) is required as a cofactor.

The protein resides in the vacuole membrane. In terms of biological role, may be involved in vacuolar sorting and osmoregulation. In Yarrowia lipolytica (strain CLIB 122 / E 150) (Yeast), this protein is Vacuolar membrane protease.